A 74-amino-acid polypeptide reads, in one-letter code: uncharacterized protein (74 aa).

The N-terminal stretch at 1 to 19 (MNPGFDAVDQETAAAQAVA) is a signal peptide.

This is an uncharacterized protein from Mycobacterium tuberculosis (strain ATCC 25618 / H37Rv).